A 481-amino-acid polypeptide reads, in one-letter code: Protein hedgehog (481 aa).

Positions 1-19 are cleaved as a signal peptide; that stretch reads MDNQAVSALWSCASATCLS. Residues 20–90 constitute a propeptide that is removed on maturation; that stretch reads LDAKRHSIEP…LALNFRHAHS (71 aa). The segment at 26–56 is disordered; that stretch reads SIEPNPDGQASPDVNNNNNNHNKSTTTVDAH. Residue cysteine 91 is the site of N-palmitoyl cysteine attachment. Ca(2+)-binding residues include glutamate 155, glutamate 156, aspartate 161, threonine 191, glutamate 192, aspartate 195, and aspartate 197. Glycine 264 carries the Cholesterol glycine ester lipid modification.

This sequence belongs to the hedgehog family. In terms of assembly, interacts with shf. The C-terminal part of the hedgehog protein precursor displays an autoproteolysis activity that results in the cleavage of the full-length protein into two parts (N-product and C-product). In addition, the C-terminal part displays a cholesterol transferase activity that results by the covalent attachment of a cholesterol moiety to the C-terminal of the newly generated N-product. The N-product is the active species in both local and long-range signaling, whereas the C-product has no signaling activity. In terms of processing, cholesterylation is required for N-product targeting to lipid rafts and multimerization. Post-translationally, N-palmitoylation by Rasp of the hedgehog N-product, within the secretory pathway, is required for the embryonic and larval patterning activities of the hedgehog signal.

It localises to the nucleus. The protein localises to the cytoplasm. The protein resides in the cell membrane. The catalysed reaction is glycyl-L-cysteinyl-[protein] + cholesterol + H(+) = [protein]-C-terminal glycyl cholesterol ester + N-terminal L-cysteinyl-[protein]. In terms of biological role, the C-terminal part of the hedgehog protein precursor displays an autoproteolysis activity that results in the cleavage of the full-length protein into two parts (N-product and C-product). In addition, the C-terminal part displays a cholesterol transferase activity that results by the covalent attachment of a cholesterol moiety to the C-terminal of the newly generated N-product. Once cleaved, the C-product has no signaling activity and diffuses from the cell. Its function is as follows. The dually lipidated hedgehog protein N-product is a morphogen which is essential for a variety of patterning events during development. Establishes the anterior-posterior axis of the embryonic segments and patterns the larval imaginal disks. Binds to the patched (ptc) receptor, which functions in association with smoothened (smo), to activate the transcription of target genes wingless (wg), decapentaplegic (dpp) and ptc. In the absence of hh, ptc represses the constitutive signaling activity of smo through fused (fu). Essential component of a signaling pathway which regulates the Duox-dependent gut immune response to bacterial uracil; required to activate Cad99C-dependent endosome formation, norpA-dependent Ca2+ mobilization and p38 MAPK, which are essential steps in the Duox-dependent production of reactive oxygen species (ROS) in response to intestinal bacterial infection. During photoreceptor differentiation, it up-regulates transcription of Ubr3, which in turn promotes the hh-signaling pathway by mediating the ubiquitination and degradation of cos. The sequence is that of Protein hedgehog from Drosophila hydei (Fruit fly).